The following is a 147-amino-acid chain: D-aminoacyl-tRNA deacylase (147 aa).

A Gly-cisPro motif, important for rejection of L-amino acids motif is present at residues 136-137; that stretch reads GP.

The protein belongs to the DTD family. As to quaternary structure, homodimer.

The protein resides in the cytoplasm. The catalysed reaction is glycyl-tRNA(Ala) + H2O = tRNA(Ala) + glycine + H(+). The enzyme catalyses a D-aminoacyl-tRNA + H2O = a tRNA + a D-alpha-amino acid + H(+). Functionally, an aminoacyl-tRNA editing enzyme that deacylates mischarged D-aminoacyl-tRNAs. Also deacylates mischarged glycyl-tRNA(Ala), protecting cells against glycine mischarging by AlaRS. Acts via tRNA-based rather than protein-based catalysis; rejects L-amino acids rather than detecting D-amino acids in the active site. By recycling D-aminoacyl-tRNA to D-amino acids and free tRNA molecules, this enzyme counteracts the toxicity associated with the formation of D-aminoacyl-tRNA entities in vivo and helps enforce protein L-homochirality. The protein is D-aminoacyl-tRNA deacylase of Streptococcus pneumoniae serotype 4 (strain ATCC BAA-334 / TIGR4).